The sequence spans 314 residues: Methionyl-tRNA formyltransferase (314 aa).

A (6S)-5,6,7,8-tetrahydrofolate-binding site is contributed by 109-112 (SLLP).

The protein belongs to the Fmt family.

The enzyme catalyses L-methionyl-tRNA(fMet) + (6R)-10-formyltetrahydrofolate = N-formyl-L-methionyl-tRNA(fMet) + (6S)-5,6,7,8-tetrahydrofolate + H(+). Its function is as follows. Attaches a formyl group to the free amino group of methionyl-tRNA(fMet). The formyl group appears to play a dual role in the initiator identity of N-formylmethionyl-tRNA by promoting its recognition by IF2 and preventing the misappropriation of this tRNA by the elongation apparatus. This chain is Methionyl-tRNA formyltransferase, found in Alkaliphilus metalliredigens (strain QYMF).